The sequence spans 250 residues: Ribonuclease PH (250 aa).

Phosphate-binding positions include R87 and 125–127; that span reads GTR.

Belongs to the RNase PH family. In terms of assembly, homohexameric ring arranged as a trimer of dimers.

It carries out the reaction tRNA(n+1) + phosphate = tRNA(n) + a ribonucleoside 5'-diphosphate. Functionally, phosphorolytic 3'-5' exoribonuclease that plays an important role in tRNA 3'-end maturation. Removes nucleotide residues following the 3'-CCA terminus of tRNAs; can also add nucleotides to the ends of RNA molecules by using nucleoside diphosphates as substrates, but this may not be physiologically important. Probably plays a role in initiation of 16S rRNA degradation (leading to ribosome degradation) during starvation. This chain is Ribonuclease PH, found in Moorella thermoacetica (strain ATCC 39073 / JCM 9320).